Consider the following 285-residue polypeptide: RNA 5'-monophosphate methyltransferase (285 aa).

Residues 1-28 are disordered; sequence MAATQELSKGGVEEAVEEDDPAALKPGA. S-adenosyl-L-methionine contacts are provided by residues R46, N77, D111, 136–137, and M165; that span reads DI. In terms of domain architecture, Bin3-type SAM spans 53–275; that stretch reads ELLRQLFPPE…KHTEETQAIP (223 aa).

Belongs to the methyltransferase superfamily. Interacts with DICER1; the interaction may be mediated by RNA.

It is found in the cytoplasm. It catalyses the reaction a 5'-end 5'-phospho-ribonucleoside-RNA + S-adenosyl-L-methionine = a 5'-end (5'-methylphospho)-ribonucleoside-RNA + S-adenosyl-L-homocysteine. The enzyme catalyses a 5'-end 5'-phospho-ribonucleoside-RNA + 2 S-adenosyl-L-methionine = a 5'-end (5'-bismethylphospho)-ribonucleoside-RNA + 2 S-adenosyl-L-homocysteine. In terms of biological role, O-methyltransferase that specifically monomethylates 5'-monophosphate of cytoplasmic histidyl tRNA (tRNA(His)), acting as a capping enzyme by protecting tRNA(His) from cleavage by DICER1. Also able, with less efficiently, to methylate the 5' monophosphate of a subset of pre-miRNAs, acting as a negative regulator of miRNA processing. The 5' monophosphate of pre-miRNAs is recognized by DICER1 and is required for pre-miRNAs processing: methylation at this position reduces the processing of pre-miRNAs by DICER1. Was also reported to mediate dimethylation of pre-miR-145; however dimethylation cannot be reproduced by another group which observes a monomethylation of pre-miR-145. This Rattus norvegicus (Rat) protein is RNA 5'-monophosphate methyltransferase.